A 99-amino-acid chain; its full sequence is SAGA-associated factor 11 (99 aa).

An SGF11-type zinc finger spans residues Ile-71–Cys-92.

This sequence belongs to the SGF11 family. As to quaternary structure, component of the 1.8 MDa SAGA transcription coactivator-HAT complex. SAGA is built of 5 distinct domains with specialized functions. Within the SAGA complex, SUS1, SGF11, SGF73 and UBP8 form an additional subcomplex of SAGA called the DUB module (deubiquitination module). Interacts directly with SGF73, SUS1 and UBP8.

Its subcellular location is the nucleus. In terms of biological role, functions as a component of the transcription regulatory histone acetylation (HAT) complex SAGA. At the promoters, SAGA is required for recruitment of the basal transcription machinery. It influences RNA polymerase II transcriptional activity through different activities such as TBP interaction and promoter selectivity, interaction with transcription activators, and chromatin modification through histone acetylation and deubiquitination. SAGA acetylates nucleosomal histone H3 to some extent (to form H3K9ac, H3K14ac, H3K18ac and H3K23ac). SAGA interacts with DNA via upstream activating sequences (UASs). Involved in transcriptional regulation of a subset of SAGA-regulated genes. Within the SAGA complex, participates in a subcomplex, that specifically deubiquitinates histones H2B. The sequence is that of SAGA-associated factor 11 from Saccharomyces cerevisiae (strain YJM789) (Baker's yeast).